The chain runs to 85 residues: Large ribosomal subunit protein bL27 (85 aa).

The segment covering 1–10 (MAQKKGGGST) has biased composition (gly residues). The disordered stretch occupies residues 1-21 (MAQKKGGGSTRNGRDSQPKML).

Belongs to the bacterial ribosomal protein bL27 family.

The chain is Large ribosomal subunit protein bL27 from Polaromonas naphthalenivorans (strain CJ2).